The sequence spans 477 residues: P3 protein (477 aa).

Positions 1–21 (MVFRSGEGHSLQWPGPEGGTG) are disordered. A run of 8 helical transmembrane segments spans residues 225-245 (PMLL…FLMA), 253-273 (ALAL…SYLF), 281-301 (VTLA…FLPL), 320-340 (VSKI…GVVI), 361-381 (VLLL…LAGV), 383-403 (LPIV…GYGL), 417-437 (VSIE…QLSL), and 450-470 (FLVA…HFIY).

This sequence belongs to the bile acid:sodium symporter (BASS) (TC 2.A.28) family.

It is found in the membrane. Its function is as follows. The ubiquitous expression and the conservation of the sequence in distant animal species suggest that the gene codes for a protein with housekeeping functions. This Bos taurus (Bovine) protein is P3 protein (SLC10A3).